A 283-amino-acid chain; its full sequence is Undecaprenyl-diphosphatase (283 aa).

A run of 6 helical transmembrane segments spans residues 47-67 (PGLSVTAVIQLGSIVAVIAYF), 94-114 (LGIAMLIGTLPILIAGLCIKL), 127-147 (VPAIAVVSIVMALLLGFAELL), 197-217 (AARFSFLLGIPAITIAGLVEL), 227-247 (GGVLPVFVGICSAAVVSWLAI), and 261-281 (IFVVYRLLFGVLLLVWWSGSA).

This sequence belongs to the UppP family.

The protein localises to the cell inner membrane. It catalyses the reaction di-trans,octa-cis-undecaprenyl diphosphate + H2O = di-trans,octa-cis-undecaprenyl phosphate + phosphate + H(+). Its function is as follows. Catalyzes the dephosphorylation of undecaprenyl diphosphate (UPP). Confers resistance to bacitracin. The polypeptide is Undecaprenyl-diphosphatase (Synechococcus sp. (strain CC9311)).